The following is a 154-amino-acid chain: Basic phospholipase A2 PC20 (154 aa).

Residues 1-21 (MYPAHLLVLLAVCVSLLGASA) form the signal peptide. A propeptide spanning residues 22–27 (ISPRPL) is cleaved from the precursor. Cystine bridges form between C38–C98, C54–C143, C56–C72, C71–C125, C78–C118, C87–C111, and C105–C116. The Ca(2+) site is built by Y55, S57, and G59. H75 is an active-site residue. D76 is a Ca(2+) binding site. The active site involves D119.

It belongs to the phospholipase A2 family. Group I subfamily. D49 sub-subfamily. The cofactor is Ca(2+). As to expression, expressed by the venom gland.

It localises to the secreted. The catalysed reaction is a 1,2-diacyl-sn-glycero-3-phosphocholine + H2O = a 1-acyl-sn-glycero-3-phosphocholine + a fatty acid + H(+). Its function is as follows. Snake venom phospholipase A2 (PLA2) that inhibits neuromuscular transmission by blocking acetylcholine release from the nerve termini. PLA2 catalyzes the calcium-dependent hydrolysis of the 2-acyl groups in 3-sn-phosphoglycerides. The polypeptide is Basic phospholipase A2 PC20 (Laticauda colubrina (Yellow-lipped sea krait)).